The chain runs to 232 residues: AA9 family lytic polysaccharide monooxygenase C (232 aa).

Positions 1 to 19 are cleaved as a signal peptide; that stretch reads MKAAVSLALLVAVAGAASA. Positions 20 and 91 each coordinate Cu(2+). Residues cysteine 61 and cysteine 180 are joined by a disulfide bond. O2 is bound by residues histidine 166 and glutamine 175. Tyrosine 177 is a Cu(2+) binding site. Residue asparagine 184 is glycosylated (N-linked (GlcNAc...) asparagine).

It belongs to the polysaccharide monooxygenase AA9 family. It depends on Cu(2+) as a cofactor.

The protein localises to the secreted. The catalysed reaction is [(1-&gt;4)-beta-D-glucosyl]n+m + reduced acceptor + O2 = 4-dehydro-beta-D-glucosyl-[(1-&gt;4)-beta-D-glucosyl]n-1 + [(1-&gt;4)-beta-D-glucosyl]m + acceptor + H2O.. Lytic polysaccharide monooxygenase (LPMO) that depolymerizes crystalline and amorphous polysaccharides via the oxidation of scissile alpha- or beta-(1-4)-glycosidic bonds, yielding C1 or C4 oxidation products. Catalysis by LPMOs requires the reduction of the active-site copper from Cu(II) to Cu(I) by a reducing agent and H(2)O(2) or O(2) as a cosubstrate. The polypeptide is AA9 family lytic polysaccharide monooxygenase C (Malbranchea cinnamomea (Thermophilic fungus)).